The primary structure comprises 168 residues: Iron-sulfur cluster assembly enzyme ISCU (168 aa).

The transit peptide at 1–35 directs the protein to the mitochondrion; it reads MAAATGAGRLRRAASALLLRSPRLPARELSAPARL. The residue at position 15 (serine 15) is a Phosphoserine. Cysteine 70 acts as the Cysteine persulfide intermediate in catalysis. Cysteine 70 is modified (cysteine persulfide). Zn(2+) is bound by residues aspartate 72, cysteine 96, and cysteine 139. The active-site Cysteine persulfide intermediate is cysteine 139. Cysteine 139 carries the cysteine persulfide modification.

Belongs to the NifU family. In terms of assembly, homodimer; Tyr-36-mediated dimerization of two iron- and sulfide-containing ISCU subunit bind to the cysteine desulfurase complex. Component of the mitochondrial core iron-sulfur cluster (ISC) complex composed of NFS1, LYRM4, NDUFAB1, ISCU, FXN, and FDX2; this complex is a heterohexamer containing two copies of each monomer. Interacts (D-state) with NFS1 (homodimer form); each monomer interacts with the C-terminal regions of each NFS1 monomer. Interacts (monomer form) with FXN (via ferrous form); the interaction is possible when both are bound to the dimeric form of the cysteine desulfurase complex (NFS1:LYRM4) and enhances FXN interaction to the dimeric form of the cysteine desulfurase complex (NFS1:LYRM4). Interacts with GLRX5. Interacts (D-state) with HSPA9. Interacts (S-state) with HSCB; this interaction stimulates the ATPase activity of HSPA9. Component of a complex composed of FXN, NFS1, LYRM4 and ISCU. Post-translationally, cysteine persulfide is reduced by thiol-containing molecules such as glutathione and L-cysteine. In terms of processing, phosphorylation at Ser-15 is required for ISCU protein stabilization in the cytosol, whereas dephosphorylation of Ser-15, due to the inhibition of mTORC1 (mammalian target of rapamycin complex 1) complex, leads to degradation of the precursor form and ultimately to a decrease in the mitochondrial mature form.

The protein localises to the mitochondrion. Mitochondrial scaffold protein, of the core iron-sulfur cluster (ISC) assembly complex, that provides the structural architecture on which the [2Fe-2S] clusters are assembled. The core iron-sulfur cluster (ISC) assembly complex is involved in the de novo synthesis of a [2Fe-2S] cluster, the first step of the mitochondrial iron-sulfur protein biogenesis. This process is initiated by the cysteine desulfurase complex (NFS1:LYRM4:NDUFAB1) that produces persulfide which is delivered on the scaffold protein ISCU in a FXN-dependent manner. Then this complex is stabilized by FDX2 which provides reducing equivalents to accomplish the [2Fe-2S] cluster assembly. Finally, the [2Fe-2S] cluster is transferred from ISCU to chaperone proteins, including HSCB, HSPA9 and GLRX5. Exists as two slow interchanging conformational states, a structured (S) and disordered (D) form. May modulate NFS1 desulfurase activity in a zinc-dependent manner. Modulates the interaction between FXN and the cysteine desulfurase complex. The chain is Iron-sulfur cluster assembly enzyme ISCU from Mus musculus (Mouse).